The sequence spans 756 residues: 3-O-alpha-D-glucosyl-L-rhamnose phosphorylase (756 aa).

A substrate-binding site is contributed by 358-359; that stretch reads WD. E486 acts as the Proton donor in catalysis. A substrate-binding site is contributed by 590 to 591; that stretch reads KQ.

This sequence belongs to the glycosyl hydrolase 65 family. As to quaternary structure, monomer.

Its subcellular location is the cytoplasm. It catalyses the reaction 3-O-alpha-D-glucosyl-L-rhamnose + phosphate = beta-D-glucose 1-phosphate + L-rhamnopyranose. In terms of biological role, phosphorylase showing strict alpha-1,3-regioselectivity and producing 3-O-alpha-D-glucopyranosyl-L-rhamnopyranose. Specific for L-rhamnose as acceptor and beta-D-glucose 1-phosphate as donor. Does not phosphorylate alpha,alpha-trehalose, kojibiose, nigerose, or maltose. The chain is 3-O-alpha-D-glucosyl-L-rhamnose phosphorylase from Lachnoclostridium phytofermentans (strain ATCC 700394 / DSM 18823 / ISDg) (Clostridium phytofermentans).